The primary structure comprises 392 residues: Chorismate synthase (392 aa).

NADP(+)-binding residues include Arg40 and Arg46. FMN is bound by residues 135–137, 256–257, Gly300, 315–319, and Arg341; these read RAS, QA, and KPISS.

It belongs to the chorismate synthase family. In terms of assembly, homotetramer. FMNH2 is required as a cofactor.

It carries out the reaction 5-O-(1-carboxyvinyl)-3-phosphoshikimate = chorismate + phosphate. The protein operates within metabolic intermediate biosynthesis; chorismate biosynthesis; chorismate from D-erythrose 4-phosphate and phosphoenolpyruvate: step 7/7. Catalyzes the anti-1,4-elimination of the C-3 phosphate and the C-6 proR hydrogen from 5-enolpyruvylshikimate-3-phosphate (EPSP) to yield chorismate, which is the branch point compound that serves as the starting substrate for the three terminal pathways of aromatic amino acid biosynthesis. This reaction introduces a second double bond into the aromatic ring system. This is Chorismate synthase from Salinispora tropica (strain ATCC BAA-916 / DSM 44818 / JCM 13857 / NBRC 105044 / CNB-440).